A 267-amino-acid polypeptide reads, in one-letter code: Formamidopyrimidine-DNA glycosylase (267 aa).

The Schiff-base intermediate with DNA role is filled by Pro-2. The active-site Proton donor is Glu-3. Lys-58 functions as the Proton donor; for beta-elimination activity in the catalytic mechanism. Residues His-91, Arg-110, and Arg-152 each coordinate DNA. The FPG-type zinc-finger motif lies at 233–267 (DVYGRGTDACTRCGGALEEIRLGNRSTVFCPRCQT). Arg-257 acts as the Proton donor; for delta-elimination activity in catalysis.

This sequence belongs to the FPG family. Monomer. Requires Zn(2+) as cofactor.

The catalysed reaction is Hydrolysis of DNA containing ring-opened 7-methylguanine residues, releasing 2,6-diamino-4-hydroxy-5-(N-methyl)formamidopyrimidine.. The enzyme catalyses 2'-deoxyribonucleotide-(2'-deoxyribose 5'-phosphate)-2'-deoxyribonucleotide-DNA = a 3'-end 2'-deoxyribonucleotide-(2,3-dehydro-2,3-deoxyribose 5'-phosphate)-DNA + a 5'-end 5'-phospho-2'-deoxyribonucleoside-DNA + H(+). Functionally, involved in base excision repair of DNA damaged by oxidation or by mutagenic agents. Acts as a DNA glycosylase that recognizes and removes damaged bases. Has a preference for oxidized purines, such as 7,8-dihydro-8-oxoguanine (8-oxoG). Has AP (apurinic/apyrimidinic) lyase activity and introduces nicks in the DNA strand. Cleaves the DNA backbone by beta-delta elimination to generate a single-strand break at the site of the removed base with both 3'- and 5'-phosphates. The polypeptide is Formamidopyrimidine-DNA glycosylase (Geobacter metallireducens (strain ATCC 53774 / DSM 7210 / GS-15)).